We begin with the raw amino-acid sequence, 475 residues long: Ribulose bisphosphate carboxylase large chain (475 aa).

The propeptide occupies 1–2 (MS). Pro3 carries the N-acetylproline modification. The residue at position 14 (Lys14) is an N6,N6,N6-trimethyllysine. Substrate is bound by residues Asn123 and Thr173. The Proton acceptor role is filled by Lys175. Substrate is bound at residue Lys177. The Mg(2+) site is built by Lys201, Asp203, and Glu204. Lys201 carries the post-translational modification N6-carboxylysine. Catalysis depends on His294, which acts as the Proton acceptor. Substrate contacts are provided by Arg295, His327, and Ser379.

This sequence belongs to the RuBisCO large chain family. Type I subfamily. As to quaternary structure, heterohexadecamer of 8 large chains and 8 small chains; disulfide-linked. The disulfide link is formed within the large subunit homodimers. It depends on Mg(2+) as a cofactor. In terms of processing, the disulfide bond which can form in the large chain dimeric partners within the hexadecamer appears to be associated with oxidative stress and protein turnover.

Its subcellular location is the plastid. The protein resides in the chloroplast. It catalyses the reaction 2 (2R)-3-phosphoglycerate + 2 H(+) = D-ribulose 1,5-bisphosphate + CO2 + H2O. The enzyme catalyses D-ribulose 1,5-bisphosphate + O2 = 2-phosphoglycolate + (2R)-3-phosphoglycerate + 2 H(+). Functionally, ruBisCO catalyzes two reactions: the carboxylation of D-ribulose 1,5-bisphosphate, the primary event in carbon dioxide fixation, as well as the oxidative fragmentation of the pentose substrate in the photorespiration process. Both reactions occur simultaneously and in competition at the same active site. This chain is Ribulose bisphosphate carboxylase large chain, found in Pinus longaeva (Great Basin bristlecone pine).